A 208-amino-acid chain; its full sequence is Thymidylate kinase (208 aa).

Residue 10-17 (GIDGSGKT) participates in ATP binding.

This sequence belongs to the thymidylate kinase family.

It catalyses the reaction dTMP + ATP = dTDP + ADP. Its function is as follows. Phosphorylation of dTMP to form dTDP in both de novo and salvage pathways of dTTP synthesis. The sequence is that of Thymidylate kinase from Ligilactobacillus salivarius (strain UCC118) (Lactobacillus salivarius).